The chain runs to 887 residues: Multiple RNA-binding domain-containing protein 1 (887 aa).

The region spanning 2–94 is the RRM 1 domain; sequence SRIIVKGLPV…SKIEVSMAKS (93 aa). Disordered stretches follow at residues 121–143, 203–276, and 297–336; these read KLLQ…NIDD, KEEN…RNLA, and SEAE…DEEL. 2 positions are modified to phosphoserine: Ser220 and Ser264. Residues 264–276 show a composition bias toward basic and acidic residues; it reads SDEKENEKRRNLA. Residues 306-315 show a composition bias toward polar residues; the sequence is SSYATEQNES. The segment covering 316 to 325 has biased composition (basic and acidic residues); that stretch reads LDTKKEEQPE. RRM domains are found at residues 345-423, 532-604, 663-746, and 763-840; these read GRLF…PGEE, KVIL…RGPK, VSIF…LSHR, and GKII…YAEE. Positions 864 to 887 are disordered; that stretch reads EMAALRNGGGRKKLDVDDEENEGF.

Belongs to the RRM MRD1 family. Interacts with NOP1. Binds to the 35S pre-rRNA and the U3 snoRNA.

The protein localises to the nucleus. Involved in pre-rRNA processing. Required for maintaining steady-state levels of 40S ribosomal subunit. Required for the initial processing of pre-rRNA at the A0 to A2 sites, leading to the processing of the 23S pre-rRNA intermediate to the 18S rRNA. The chain is Multiple RNA-binding domain-containing protein 1 (MRD1) from Saccharomyces cerevisiae (strain ATCC 204508 / S288c) (Baker's yeast).